The sequence spans 297 residues: N-acetylmuramic acid 6-phosphate etherase (297 aa).

The 164-residue stretch at 56 to 219 folds into the SIS domain; the sequence is AIEAFNKGGR…STISMIGIGK (164 aa). E84 functions as the Proton donor in the catalytic mechanism. The active site involves E115.

Belongs to the GCKR-like family. MurNAc-6-P etherase subfamily. In terms of assembly, homodimer.

It carries out the reaction N-acetyl-D-muramate 6-phosphate + H2O = N-acetyl-D-glucosamine 6-phosphate + (R)-lactate. It participates in amino-sugar metabolism; N-acetylmuramate degradation. Specifically catalyzes the cleavage of the D-lactyl ether substituent of MurNAc 6-phosphate, producing GlcNAc 6-phosphate and D-lactate. This chain is N-acetylmuramic acid 6-phosphate etherase, found in Lactococcus lactis subsp. cremoris (strain SK11).